The primary structure comprises 274 residues: Mitochondrial outer membrane protein porin 3 (274 aa).

The residue at position 76 (Ser76) is a Phosphoserine.

It belongs to the eukaryotic mitochondrial porin (TC 1.B.8.1) family. As to quaternary structure, interacts with KIN14F/KP1. Interacts with FBA6 and GAPC1. Expressed in leaf tips, anthers and stigma.

It is found in the cell membrane. It localises to the mitochondrion outer membrane. Its function is as follows. Forms a channel through the mitochondrial outer membrane that allows diffusion of small hydrophilic molecules. The channel adopts an open conformation at low or zero membrane potential and a closed conformation at potentials above 30-40 mV. The open state has a weak anion selectivity whereas the closed state is cation-selective. In Arabidopsis thaliana (Mouse-ear cress), this protein is Mitochondrial outer membrane protein porin 3 (VDAC3).